A 383-amino-acid polypeptide reads, in one-letter code: BRISC and BRCA1-A complex member 2 (383 aa).

The residue at position 1 (methionine 1) is an N-acetylmethionine. Phosphoserine is present on serine 2. UEV-like stretches follow at residues aspartate 30 to glutamate 147 and isoleucine 275 to alanine 364.

It belongs to the BABAM2 family. In terms of assembly, component of the ARISC complex, at least composed of UIMC1/RAP80, ABRAXAS1, BRCC3/BRCC36, BABAM2 and BABAM1/NBA1. Component of the BRCA1-A complex, at least composed of BRCA1, BARD1, UIMC1/RAP80, ABRAXAS1, BRCC3/BRCC36, BABAM2 and BABAM1/NBA1. In the BRCA1-A complex, interacts directly with ABRAXAS1, BRCC3/BRCC36 and BABAM1/NBA1. Binds polyubiquitin. Component of the BRISC complex, at least composed of ABRAXAS2, BRCC3/BRCC36, BABAM2 and BABAM1/NBA1. Identified in a complex with SHMT2 and the other subunits of the BRISC complex. Component of the BRCA1/BRCA2 containing complex (BRCC), which also contains BRCA1, BRCA2, BARD1, BRCC3/BRCC36 and RAD51. BRCC is a ubiquitin E3 ligase complex that enhances cellular survival following DNA damage. May interact with FAS and TNFRSF1A. In terms of tissue distribution, expressed in brain, heart, kidney, liver, lung, testis, germinal center B-cells and various mouse cell lines.

The protein resides in the cytoplasm. It is found in the nucleus. In terms of biological role, component of the BRCA1-A complex, a complex that specifically recognizes 'Lys-63'-linked ubiquitinated histones H2A and H2AX at DNA lesions sites, leading to target the BRCA1-BARD1 heterodimer to sites of DNA damage at double-strand breaks (DSBs). The BRCA1-A complex also possesses deubiquitinase activity that specifically removes 'Lys-63'-linked ubiquitin on histones H2A and H2AX. In the BRCA1-A complex, it acts as an adapter that bridges the interaction between BABAM1/NBA1 and the rest of the complex, thereby being required for the complex integrity and modulating the E3 ubiquitin ligase activity of the BRCA1-BARD1 heterodimer. Probably also plays a role as a component of the BRISC complex, a multiprotein complex that specifically cleaves 'Lys-63'-linked ubiquitin. May regulate TNF-alpha signaling through its interactions with TNFRSF1A. Its function is as follows. Component of the BRCA1-A complex, a complex that specifically recognizes 'Lys-63'-linked ubiquitinated histones H2A and H2AX at DNA lesions sites, leading to target the BRCA1-BARD1 heterodimer to sites of DNA damage at double-strand breaks (DSBs). The BRCA1-A complex also possesses deubiquitinase activity that specifically removes 'Lys-63'-linked ubiquitin on histones H2A and H2AX. In the BRCA1-A complex, it acts as an adapter that bridges the interaction between BABAM1/NBA1 and the rest of the complex, thereby being required for the complex integrity and modulating the E3 ubiquitin ligase activity of the BRCA1-BARD1 heterodimer. Component of the BRISC complex, a multiprotein complex that specifically cleaves 'Lys-63'-linked ubiquitin in various substrates. Within the BRISC complex, acts as an adapter that bridges the interaction between BABAM1/NBA1 and the rest of the complex, thereby being required for the complex integrity. The BRISC complex is required for normal mitotic spindle assembly and microtubule attachment to kinetochores via its role in deubiquitinating NUMA1. The BRISC complex plays a role in interferon signaling via its role in the deubiquitination of the interferon receptor IFNAR1; deubiquitination increases IFNAR1 activity by enhancing its stability and cell surface expression. Down-regulates the response to bacterial lipopolysaccharide (LPS) via its role in IFNAR1 deubiquitination. May play a role in homeostasis or cellular differentiation in cells of neural, epithelial and germline origins. May also act as a death receptor-associated anti-apoptotic protein, which inhibits the mitochondrial apoptotic pathway. May regulate TNF-alpha signaling through its interactions with TNFRSF1A; however these effects may be indirect. This Mus musculus (Mouse) protein is BRISC and BRCA1-A complex member 2 (Babam2).